Reading from the N-terminus, the 592-residue chain is V-type ATP synthase alpha chain 2 (592 aa).

237 to 244 (GGFGTGKT) contributes to the ATP binding site.

Belongs to the ATPase alpha/beta chains family.

The catalysed reaction is ATP + H2O + 4 H(+)(in) = ADP + phosphate + 5 H(+)(out). In terms of biological role, produces ATP from ADP in the presence of a proton gradient across the membrane. The V-type alpha chain is a catalytic subunit. The sequence is that of V-type ATP synthase alpha chain 2 from Clostridium tetani (strain Massachusetts / E88).